The primary structure comprises 343 residues: 4-hydroxy-2-oxovalerate aldolase 4 (343 aa).

A Pyruvate carboxyltransferase domain is found at 8 to 260 (VTVHDMTLRD…ETGVDVAKIT (253 aa)). A substrate-binding site is contributed by 16-17 (RD). D17 provides a ligand contact to Mn(2+). Residue H20 is the Proton acceptor of the active site. The substrate site is built by S170 and H199. Mn(2+) contacts are provided by H199 and H201. Position 290 (Y290) interacts with substrate.

The protein belongs to the 4-hydroxy-2-oxovalerate aldolase family.

The catalysed reaction is (S)-4-hydroxy-2-oxopentanoate = acetaldehyde + pyruvate. The protein is 4-hydroxy-2-oxovalerate aldolase 4 of Dechloromonas aromatica (strain RCB).